Reading from the N-terminus, the 422-residue chain is Adenylosuccinate synthetase (422 aa).

GTP is bound by residues 11–17 and 39–41; these read GDEGKGK and GHT. The active-site Proton acceptor is D12. Mg(2+) contacts are provided by D12 and G39. IMP-binding positions include 12–15, 37–40, T129, R143, N219, T234, and R298; these read DEGK and NAGH. The Proton donor role is filled by H40. 294-300 contacts substrate; the sequence is VTTGRKR. Residues R300, 326–328, and 411–413 each bind GTP; these read KLD and GTG.

Belongs to the adenylosuccinate synthetase family. As to quaternary structure, homodimer. Requires Mg(2+) as cofactor.

Its subcellular location is the cytoplasm. The catalysed reaction is IMP + L-aspartate + GTP = N(6)-(1,2-dicarboxyethyl)-AMP + GDP + phosphate + 2 H(+). It functions in the pathway purine metabolism; AMP biosynthesis via de novo pathway; AMP from IMP: step 1/2. Plays an important role in the de novo pathway and in the salvage pathway of purine nucleotide biosynthesis. Catalyzes the first committed step in the biosynthesis of AMP from IMP. This chain is Adenylosuccinate synthetase, found in Talaromyces stipitatus (strain ATCC 10500 / CBS 375.48 / QM 6759 / NRRL 1006) (Penicillium stipitatum).